The primary structure comprises 60 residues: Hemocyte defensin Cg-Defh1 (60 aa).

Residues 1 to 17 form the signal peptide; the sequence is LFTLVVLLMVSADMAFA. Phe19, Gly20, and Cys21 together coordinate beta-D-GlcNAc-(1-&gt;4)-Mur2Ac(oyl-L-Ala-gamma-D-Glu-L-Lys-D-Ala-D-Ala)-di-trans,octa-cis-undecaprenyl diphosphate. 4 disulfides stabilise this stretch: Cys21-Cys42, Cys28-Cys51, Cys32-Cys53, and Cys37-Cys56. The segment at 22–25 is binds to membrane interface; sequence PRDQ. His31 is a beta-D-GlcNAc-(1-&gt;4)-Mur2Ac(oyl-L-Ala-gamma-D-Glu-L-Lys-D-Ala-D-Ala)-di-trans,octa-cis-undecaprenyl diphosphate binding site. The interval 43 to 49 is binds to membrane interface; that stretch reads DAVTLWL. Cys51 is a binding site for beta-D-GlcNAc-(1-&gt;4)-Mur2Ac(oyl-L-Ala-gamma-D-Glu-L-Lys-D-Ala-D-Ala)-di-trans,octa-cis-undecaprenyl diphosphate.

The protein belongs to the invertebrate defensin family. In terms of tissue distribution, expressed in hemocytes.

The protein resides in the secreted. Its subcellular location is the target cell membrane. In terms of biological role, antibacterial peptide mostly active against Gram-positive bacteria. It acts by selectively inhibiting peptidoglycan biosynthesis through complex formation with the cell wall precursor lipid II (1:1 molar ratio) thus inhibiting cell wall synthesis. It does not disrupt cell membranes. Is noticeably less potent than Cg-Defh2 and Cg-Defm. Shows no or limited activities against Gram-negative bacteria. The sequence is that of Hemocyte defensin Cg-Defh1 from Magallana gigas (Pacific oyster).